We begin with the raw amino-acid sequence, 694 residues long: Cyclic nucleotide-gated channel alpha-3 (694 aa).

Composition is skewed to polar residues over residues 1–11 and 112–123; these read MAKINTQYSHP and SQESNAQANVGS. Disordered regions lie at residues 1–24 and 109–152; these read MAKI…SDRD and EVSS…EEKK. The Cytoplasmic segment spans residues 1 to 170; the sequence is MAKINTQYSH…VDPSSNLYYR (170 aa). The chain crosses the membrane as a helical span at residues 171–192; sequence WLTAIALPVFYNWYLLICRACF. The Extracellular segment spans residues 193–198; that stretch reads DELQSE. Residues 199–219 traverse the membrane as a helical segment; it reads YLMLWLVLDYSADVLYVLDVL. The Cytoplasmic segment spans residues 220–246; sequence VRARTGFLEQGLMVSDTNRLWQHYKTT. Residues 247–266 form a helical membrane-spanning segment; sequence TQFKLDVLSLVPTDLAYLKV. Residues 267-270 are Extracellular-facing; the sequence is GTNY. The chain crosses the membrane as a helical span at residues 271–288; the sequence is PEVRFNRLLKFSRLFEFF. Residues 289 to 298 are Cytoplasmic-facing; that stretch reads DRTETRTNYP. Residues 298–406 form an ion conduction pathway region; that stretch reads PNMFRIGNLV…GNVGSMISNM (109 aa). Residues 299-321 traverse the membrane as a helical segment; it reads NMFRIGNLVLYILIIIHWNACIY. At 322–347 the chain is on the extracellular side; sequence FAISKFIGFGTDSWVYPNISIPEHGR. Residue N339 is glycosylated (N-linked (GalNAc...) asparagine). 2 consecutive transmembrane segments (helical) span residues 348–378 and 379–403; these read LSRK…DEEY and LFVV…GSMI. The segment at 365–368 is selectivity filter; that stretch reads TIGE. The Cytoplasmic segment spans residues 404–694; the sequence is SNMNASRAEF…DATKTEDKQQ (291 aa). The segment at 408–485 is C-linker; it reads ASRAEFQAKI…TLKKVRIFQD (78 aa). Residues 488-608 are cyclic nucleotide-binding domain; that stretch reads AGLLVELVLK…EEKGRQILMK (121 aa). Residues G548, E549, S551, R564, T565, and D609 each contribute to the 3',5'-cyclic GMP site. The stretch at 626 to 669 forms a coiled coil; sequence LEEKVEQLGSSLDTLQTRFARLLAEYNATQMKMKQRLSQLESQV. Residues 662 to 694 form a disordered region; sequence LSQLESQVKGGGDKPLADGEVPGDATKTEDKQQ.

The protein belongs to the cyclic nucleotide-gated cation channel (TC 1.A.1.5) family. CNGA3 subfamily. As to quaternary structure, forms heterotetrameric channels composed of CNGA3 and CNGB3 subunits with 3:1 stoichiometry. Prominently expressed in retina.

The protein resides in the cell membrane. It catalyses the reaction Ca(2+)(in) = Ca(2+)(out). The enzyme catalyses Na(+)(in) = Na(+)(out). It carries out the reaction K(+)(in) = K(+)(out). The catalysed reaction is NH4(+)(in) = NH4(+)(out). It catalyses the reaction Rb(+)(in) = Rb(+)(out). The enzyme catalyses Li(+)(in) = Li(+)(out). It carries out the reaction Cs(+)(in) = Cs(+)(out). Its activity is regulated as follows. Inhibited by L-cis-diltiazem. In terms of biological role, pore-forming subunit of the cone cyclic nucleotide-gated channel. Mediates cone photoresponses at bright light converting transient changes in intracellular cGMP levels into electrical signals. In the dark, cGMP levels are high and keep the channel open enabling a steady inward current carried by Na(+) and Ca(2+) ions that leads to membrane depolarization and neurotransmitter release from synaptic terminals. Upon photon absorption cGMP levels decline leading to channel closure and membrane hyperpolarization that ultimately slows neurotransmitter release and signals the presence of light, the end point of the phototransduction cascade. Pore-forming subunit of the gustatory cyclic nucleotide-gated channel. In the taste buds, may sense oral extracellular pH and conduct ion currents that modulate the excitability of taste cells. Conducts cGMP- and cAMP-gated ion currents, with permeability for monovalent and divalent cations. The polypeptide is Cyclic nucleotide-gated channel alpha-3 (Homo sapiens (Human)).